We begin with the raw amino-acid sequence, 326 residues long: Tetraacyldisaccharide 4'-kinase (326 aa).

T55–T62 is a binding site for ATP.

The protein belongs to the LpxK family.

The catalysed reaction is a lipid A disaccharide + ATP = a lipid IVA + ADP + H(+). It participates in glycolipid biosynthesis; lipid IV(A) biosynthesis; lipid IV(A) from (3R)-3-hydroxytetradecanoyl-[acyl-carrier-protein] and UDP-N-acetyl-alpha-D-glucosamine: step 6/6. Transfers the gamma-phosphate of ATP to the 4'-position of a tetraacyldisaccharide 1-phosphate intermediate (termed DS-1-P) to form tetraacyldisaccharide 1,4'-bis-phosphate (lipid IVA). The sequence is that of Tetraacyldisaccharide 4'-kinase from Serratia proteamaculans (strain 568).